A 173-amino-acid chain; its full sequence is Bifunctional protein PyrR (173 aa).

A PRPP-binding motif is present at residues 93 to 105 (IILVDDVLYTGRT).

It belongs to the purine/pyrimidine phosphoribosyltransferase family. PyrR subfamily. In terms of assembly, homodimer and homohexamer; in equilibrium.

The enzyme catalyses UMP + diphosphate = 5-phospho-alpha-D-ribose 1-diphosphate + uracil. Functionally, regulates transcriptional attenuation of the pyrimidine nucleotide (pyr) operon by binding in a uridine-dependent manner to specific sites on pyr mRNA. This disrupts an antiterminator hairpin in the RNA and favors formation of a downstream transcription terminator, leading to a reduced expression of downstream genes. In terms of biological role, also displays a weak uracil phosphoribosyltransferase activity which is not physiologically significant. This Streptococcus equi subsp. zooepidemicus (strain H70) protein is Bifunctional protein PyrR.